The sequence spans 318 residues: Replication factor C small subunit (318 aa).

43–50 contributes to the ATP binding site; it reads GSVGTGKT.

This sequence belongs to the activator 1 small subunits family. RfcS subfamily. Heteromultimer composed of small subunits (RfcS) and large subunits (RfcL).

Functionally, part of the RFC clamp loader complex which loads the PCNA sliding clamp onto DNA. In Thermoplasma volcanium (strain ATCC 51530 / DSM 4299 / JCM 9571 / NBRC 15438 / GSS1), this protein is Replication factor C small subunit.